A 250-amino-acid polypeptide reads, in one-letter code: Small ribosomal subunit protein uS2 (250 aa).

It belongs to the universal ribosomal protein uS2 family.

The sequence is that of Small ribosomal subunit protein uS2 from Paraburkholderia xenovorans (strain LB400).